The sequence spans 278 residues: Large ribosomal subunit protein uL2 (278 aa).

Disordered regions lie at residues Met-1–Lys-59 and Arg-222–Arg-278. The segment covering Ser-16–Ser-27 has biased composition (polar residues). 2 stretches are compositionally biased toward basic residues: residues Val-45–Lys-59 and Val-269–Arg-278.

This sequence belongs to the universal ribosomal protein uL2 family. Part of the 50S ribosomal subunit. Forms a bridge to the 30S subunit in the 70S ribosome.

Functionally, one of the primary rRNA binding proteins. Required for association of the 30S and 50S subunits to form the 70S ribosome, for tRNA binding and peptide bond formation. It has been suggested to have peptidyltransferase activity; this is somewhat controversial. Makes several contacts with the 16S rRNA in the 70S ribosome. This chain is Large ribosomal subunit protein uL2, found in Corynebacterium urealyticum (strain ATCC 43042 / DSM 7109).